The sequence spans 205 residues: dITP/XTP pyrophosphatase (205 aa).

10–15 contributes to the substrate binding site; the sequence is TKNEGK. Residues Glu-44 and Asp-73 each coordinate Mg(2+). Asp-73 functions as the Proton acceptor in the catalytic mechanism. Substrate is bound by residues Ser-74, 156–159, Lys-179, and 184–185; these read FGYD and HR.

It belongs to the HAM1 NTPase family. As to quaternary structure, homodimer. The cofactor is Mg(2+).

It catalyses the reaction XTP + H2O = XMP + diphosphate + H(+). The enzyme catalyses dITP + H2O = dIMP + diphosphate + H(+). It carries out the reaction ITP + H2O = IMP + diphosphate + H(+). In terms of biological role, pyrophosphatase that catalyzes the hydrolysis of nucleoside triphosphates to their monophosphate derivatives, with a high preference for the non-canonical purine nucleotides XTP (xanthosine triphosphate), dITP (deoxyinosine triphosphate) and ITP. Seems to function as a house-cleaning enzyme that removes non-canonical purine nucleotides from the nucleotide pool, thus preventing their incorporation into DNA/RNA and avoiding chromosomal lesions. This is dITP/XTP pyrophosphatase from Dictyoglomus thermophilum (strain ATCC 35947 / DSM 3960 / H-6-12).